The chain runs to 470 residues: Sulfate adenylyltransferase subunit 1 (470 aa).

Positions 22-237 constitute a tr-type G domain; sequence KEVLRFITCG…LEEVPVKSEE (216 aa). Positions 31 to 38 are G1; that stretch reads GSVDDGKS. 31–38 is a binding site for GTP; sequence GSVDDGKS. The interval 89–93 is G2; the sequence is GITID. The tract at residues 110 to 113 is G3; the sequence is DTPG. GTP is bound by residues 110–114 and 165–168; these read DTPGH and NKMD. The interval 165–168 is G4; that stretch reads NKMD. A G5 region spans residues 202–204; that stretch reads SAK.

The protein belongs to the TRAFAC class translation factor GTPase superfamily. Classic translation factor GTPase family. CysN/NodQ subfamily. Heterodimer composed of CysD, the smaller subunit, and CysN.

It carries out the reaction sulfate + ATP + H(+) = adenosine 5'-phosphosulfate + diphosphate. The protein operates within sulfur metabolism; hydrogen sulfide biosynthesis; sulfite from sulfate: step 1/3. With CysD forms the ATP sulfurylase (ATPS) that catalyzes the adenylation of sulfate producing adenosine 5'-phosphosulfate (APS) and diphosphate, the first enzymatic step in sulfur assimilation pathway. APS synthesis involves the formation of a high-energy phosphoric-sulfuric acid anhydride bond driven by GTP hydrolysis by CysN coupled to ATP hydrolysis by CysD. This chain is Sulfate adenylyltransferase subunit 1, found in Methylorubrum populi (strain ATCC BAA-705 / NCIMB 13946 / BJ001) (Methylobacterium populi).